A 411-amino-acid polypeptide reads, in one-letter code: Transforming growth factor beta regulator 1 (411 aa).

Disordered regions lie at residues 1 to 29 and 119 to 146; these read MSLL…PKKS and GPIS…KGKE. Position 2 is an N-acetylserine (serine 2). Position 10 is a phosphoserine (serine 10). The region spanning 182–241 is the FYR N-terminal domain; the sequence is VFPIGLGGLTVYSLGEIITDRPGFHDESAIYPVGYCSTRIYASMKCPDQKCLYTCQIKDG. Residues 242-321 form the FYR C-terminal domain; that stretch reads GVQPQFEIVP…RKCINYQWVK (80 aa).

This sequence belongs to the TBRG1 family. Interacts with CDKN2A and MDM2. Ubiquitinated; mediated by MDM2 and leading to its subsequent proteasomal degradation. Widely expressed at low levels in most tissues, with highest levels in pancreas, lung and liver. Expression is decreased in primary tumors including lung, liver, breast, pancreas and kidney carcinomas, chronic lymphocytic leukemia and diffuse large B-cell lymphoma.

It is found in the nucleus. Its function is as follows. Acts as a growth inhibitor. Can activate p53/TP53, causes G1 arrest and collaborates with CDKN2A to restrict proliferation, but does not require either protein to inhibit DNA synthesis. Redistributes CDKN2A into the nucleoplasm. Involved in maintaining chromosomal stability. The sequence is that of Transforming growth factor beta regulator 1 (TBRG1) from Homo sapiens (Human).